A 612-amino-acid chain; its full sequence is Phosphopentomutase (612 aa).

An N-acetylalanine modification is found at A2. Alpha-D-glucose 1,6-bisphosphate contacts are provided by R63 and S165. S165 acts as the Phosphoserine intermediate in catalysis. Mg(2+)-binding residues include S165, D322, D324, and D326. S165 carries the phosphoserine modification. Residues D326, R327, T400, E424, and K438 each coordinate alpha-D-glucose 1,6-bisphosphate.

This sequence belongs to the phosphohexose mutase family. As to quaternary structure, monomer. The cofactor is Mg(2+).

The protein resides in the cytoplasm. Its subcellular location is the cytosol. The enzyme catalyses alpha-D-ribose 1-phosphate = D-ribose 5-phosphate. It catalyses the reaction 2-deoxy-alpha-D-ribose 1-phosphate = 2-deoxy-D-ribose 5-phosphate. It carries out the reaction alpha-D-glucose 1-phosphate = alpha-D-glucose 6-phosphate. The catalysed reaction is O-phospho-L-seryl-[protein] + alpha-D-glucose 1-phosphate = alpha-D-glucose 1,6-bisphosphate + L-seryl-[protein]. The enzyme catalyses alpha-D-glucose 1,6-bisphosphate + L-seryl-[protein] = O-phospho-L-seryl-[protein] + alpha-D-glucose 6-phosphate. Catalyzes the conversion of the nucleoside breakdown products ribose-1-phosphate and deoxyribose-1-phosphate to the corresponding 5-phosphopentoses. Catalyzes the reversible isomerization of alpha-D-glucose 1-phosphate to alpha-D-glucose 6-phosphate but with a lower catalytic efficiency. The mechanism proceeds via the intermediate compound alpha-D-glucose 1,6-bisphosphate. In vitro, also has a low glucose 1,6-bisphosphate synthase activity which is most probably not physiologically relevant. In Pongo abelii (Sumatran orangutan), this protein is Phosphopentomutase (PGM2).